The primary structure comprises 488 residues: Aspartyl/glutamyl-tRNA(Asn/Gln) amidotransferase subunit B (488 aa).

This sequence belongs to the GatB/GatE family. GatB subfamily. Heterotrimer of A, B and C subunits.

It catalyses the reaction L-glutamyl-tRNA(Gln) + L-glutamine + ATP + H2O = L-glutaminyl-tRNA(Gln) + L-glutamate + ADP + phosphate + H(+). The enzyme catalyses L-aspartyl-tRNA(Asn) + L-glutamine + ATP + H2O = L-asparaginyl-tRNA(Asn) + L-glutamate + ADP + phosphate + 2 H(+). Functionally, allows the formation of correctly charged Asn-tRNA(Asn) or Gln-tRNA(Gln) through the transamidation of misacylated Asp-tRNA(Asn) or Glu-tRNA(Gln) in organisms which lack either or both of asparaginyl-tRNA or glutaminyl-tRNA synthetases. The reaction takes place in the presence of glutamine and ATP through an activated phospho-Asp-tRNA(Asn) or phospho-Glu-tRNA(Gln). The polypeptide is Aspartyl/glutamyl-tRNA(Asn/Gln) amidotransferase subunit B (Ralstonia nicotianae (strain ATCC BAA-1114 / GMI1000) (Ralstonia solanacearum)).